Consider the following 193-residue polypeptide: Cysteine and glycine-rich protein 1 (193 aa).

The LIM zinc-binding 1 domain maps to 10–61 (CGVCQKTVYFAEEVQCEGNSFHKSCFLCMVCKKNLDSTTVAVHGEEIYCKSC). A Nuclear localization signal motif is present at residues 64–69 (KKYGPK). Position 81 is a phosphoserine (Ser81). Lys84 is modified (N6-acetyllysine). Residue Lys91 forms a Glycyl lysine isopeptide (Lys-Gly) (interchain with G-Cter in SUMO2) linkage. Residues Lys112, Lys131, Lys137, and Lys161 each carry the N6-acetyllysine modification. Positions 119-170 (CPRCSQAVYAAEKVIGAGKSWHKSCFRCAKCGKGLESTTLADKDGEIYCKGC) constitute an LIM zinc-binding 2 domain. Phosphoserine is present on Ser192.

In terms of assembly, interacts with ASCC1; ASCC2 and TRIP4.

Its subcellular location is the nucleus. Could play a role in neuronal development. The chain is Cysteine and glycine-rich protein 1 (Csrp1) from Rattus norvegicus (Rat).